The sequence spans 347 residues: Protein pelota homolog (347 aa).

The protein belongs to the eukaryotic release factor 1 family. Pelota subfamily. As to quaternary structure, monomer. Requires a divalent metal cation as cofactor.

The protein resides in the cytoplasm. Functionally, may function in recognizing stalled ribosomes, interact with stem-loop structures in stalled mRNA molecules, and effect endonucleolytic cleavage of the mRNA. May play a role in the release non-functional ribosomes and degradation of damaged mRNAs. Has endoribonuclease activity. In Methanothrix thermoacetophila (strain DSM 6194 / JCM 14653 / NBRC 101360 / PT) (Methanosaeta thermophila), this protein is Protein pelota homolog.